A 319-amino-acid polypeptide reads, in one-letter code: MTSKRAEVLAKNSEMSRDEWLIERRKGIGGSDASIILGLNKWKTPFELWLDKTGQVPVSESQSEAAYFGSLLEDIVAKEFEIRSGKKVRRKKAILRHPEYNFILANVDRMIVGEKAILECKTTSAYNLKEWEDEEIPESYIVQVQHYLGVLGPEYRKAYFAVLIGGNKFVWKEIERDDELIDMIFKAEIEFWNDKVLGGQAPALDGSSAAEEYLKKRYAETENNKAIDLTAANRERIQQYLLIKEQISELQSQAKELENQIKHEMKDAEYGFIGNYQACWKPVVSNRIDTKKLKDQFPDVYEKVKKETHFRRFGIKEVS.

This is an uncharacterized protein from Bacillus subtilis (strain 168).